Consider the following 271-residue polypeptide: Phosphatidylinositol transfer protein beta isoform (271 aa).

An N6-acetyllysine modification is found at Lys-215. The residue at position 262 (Ser-262) is a Phosphoserine.

This sequence belongs to the PtdIns transfer protein family. PI transfer class I subfamily. Constitutive phosphorylation of Ser-262 has no effect on phospholipid transfer activity but is required for Golgi targeting. As to expression, widely expressed in various tissues including brain.

It is found in the golgi apparatus. The protein localises to the golgi apparatus membrane. The protein resides in the endoplasmic reticulum membrane. It carries out the reaction a 1,2-diacyl-sn-glycero-3-phosphocholine(in) = a 1,2-diacyl-sn-glycero-3-phosphocholine(out). It catalyses the reaction a 1,2-diacyl-sn-glycero-3-phospho-(1D-myo-inositol)(in) = a 1,2-diacyl-sn-glycero-3-phospho-(1D-myo-inositol)(out). The enzyme catalyses an N-(acyl)-sphingosylphosphocholine(in) = an N-(acyl)-sphingosylphosphocholine(out). Phosphatidylinositol transfer activity is inhibited by N-ethylmaleimide. Its function is as follows. Catalyzes the transfer of phosphatidylinositol and phosphatidylcholine between membranes. Also catalyzes the transfer of sphingomyelin. Required for COPI-mediated retrograde transport from the Golgi to the endoplasmic reticulum; phosphatidylinositol and phosphatidylcholine transfer activity is essential for this function. This is Phosphatidylinositol transfer protein beta isoform (PITPNB) from Homo sapiens (Human).